A 65-amino-acid chain; its full sequence is uncharacterized protein (65 aa).

This is an uncharacterized protein from Thermoproteus tenax (TTV1).